A 390-amino-acid chain; its full sequence is GTPase Obg (390 aa).

The Obg domain maps to 1–159 (MKFVDEAAIL…RELMLELLLL (159 aa)). One can recognise an OBG-type G domain in the interval 160–333 (ADVGMLGLPN…LCWDVMSFLN (174 aa)). Residues 166–173 (GLPNAGKS), 191–195 (FTTLI), 213–216 (DIPG), 283–286 (NKID), and 314–316 (SAA) contribute to the GTP site. S173 and T193 together coordinate Mg(2+). Acidic residues predominate over residues 364-384 (VEAEAEDDWDDDWDEEDDDGV). The segment at 364–390 (VEAEAEDDWDDDWDEEDDDGVEIIYER) is disordered.

Belongs to the TRAFAC class OBG-HflX-like GTPase superfamily. OBG GTPase family. As to quaternary structure, monomer. Mg(2+) serves as cofactor.

It is found in the cytoplasm. An essential GTPase which binds GTP, GDP and possibly (p)ppGpp with moderate affinity, with high nucleotide exchange rates and a fairly low GTP hydrolysis rate. Plays a role in control of the cell cycle, stress response, ribosome biogenesis and in those bacteria that undergo differentiation, in morphogenesis control. This chain is GTPase Obg, found in Yersinia pestis.